The chain runs to 504 residues: ATP synthase subunit alpha, chloroplastic (504 aa).

Position 170-177 (170-177 (GDRQTGKT)) interacts with ATP.

This sequence belongs to the ATPase alpha/beta chains family. F-type ATPases have 2 components, CF(1) - the catalytic core - and CF(0) - the membrane proton channel. CF(1) has five subunits: alpha(3), beta(3), gamma(1), delta(1), epsilon(1). CF(0) has four main subunits: a, b, b' and c.

The protein localises to the plastid. It is found in the chloroplast thylakoid membrane. The catalysed reaction is ATP + H2O + 4 H(+)(in) = ADP + phosphate + 5 H(+)(out). In terms of biological role, produces ATP from ADP in the presence of a proton gradient across the membrane. The alpha chain is a regulatory subunit. This is ATP synthase subunit alpha, chloroplastic from Porphyra purpurea (Red seaweed).